Reading from the N-terminus, the 1033-residue chain is uncharacterized protein (1033 aa).

This is an uncharacterized protein from Mycoplasma pneumoniae (strain ATCC 29342 / M129 / Subtype 1) (Mycoplasmoides pneumoniae).